A 471-amino-acid chain; its full sequence is Putative multidrug resistance protein MdtD (471 aa).

The Periplasmic segment spans residues 1 to 12 (MTDLPDSTRWQL). Residues 13 to 33 (WIVAFGFFMQSLDTTIVNTAI) traverse the membrane as a helical segment. Topologically, residues 34–48 (PSMAQSLGESPLHMH) are cytoplasmic. The helical transmembrane segment at 49 to 69 (MVIVSYVLTVAVMLPASGWLA) threads the bilayer. Over 70 to 76 (DKVGVRN) the chain is Periplasmic. A helical membrane pass occupies residues 77–97 (IFFTAIVLFTLGSLFCALSGT). Topologically, residues 98-101 (LNEL) are cytoplasmic. A helical transmembrane segment spans residues 102–124 (LLARALQGVGGAMMVPVGRLTVM). The Periplasmic portion of the chain corresponds to 125–137 (KIVPREQYMAAMT). The chain crosses the membrane as a helical span at residues 138 to 158 (FVTLPGQVGPLLGPALGGLLV). The Cytoplasmic segment spans residues 159-164 (EYASWH). A helical transmembrane segment spans residues 165 to 185 (WIFLINIPVGIIGAIATLMLM). At 186-196 (PNYTMQTRRFD) the chain is on the periplasmic side. The chain crosses the membrane as a helical span at residues 197–217 (LSGFLLLAVGMAVLTLALDGS). The Cytoplasmic segment spans residues 218–224 (KGTGLSP). The chain crosses the membrane as a helical span at residues 225-245 (LAIAGLVAVGVVALVLYLLHA). Residues 246–262 (RNNNRALFSLKLFRTRT) lie on the Periplasmic side of the membrane. A helical membrane pass occupies residues 263 to 283 (FSLGLAGSFAGRIGSGMLPFM). Residues 284 to 285 (TP) lie on the Cytoplasmic side of the membrane. Residues 286 to 306 (VFLQIGLGFSPFHAGLMMIPM) traverse the membrane as a helical segment. Over 307–341 (VLGSMGMKRIVVQVVNRFGYRRVLVATTLGLSLVT) the chain is Periplasmic. A helical transmembrane segment spans residues 342–362 (LLFMTTALLGWYYVLPFVLFL). The Cytoplasmic portion of the chain corresponds to 363-395 (QGMVNSTRFSSMNTLTLKDLPDNLASSGNSLLS). The helical transmembrane segment at 396 to 416 (MIMQLSMSIGVTIAGLLLGLF) threads the bilayer. The Periplasmic portion of the chain corresponds to 417–430 (GSQHVSVDSGTTQT). Residues 431-451 (VFMYTWLSMAFIIALPAFIFA) form a helical membrane-spanning segment. Residues 452 to 471 (RVPNDTHQNVAISRRKRSAQ) are Cytoplasmic-facing.

Belongs to the major facilitator superfamily. TCR/Tet family.

The protein localises to the cell inner membrane. The protein is Putative multidrug resistance protein MdtD of Shigella flexneri serotype 5b (strain 8401).